We begin with the raw amino-acid sequence, 192 residues long: Erythropoietin (192 aa).

Positions 1–27 (MGVHECPAWLWLLLSLVSLPLGLPVPG) are cleaved as a signal peptide. 2 cysteine pairs are disulfide-bonded: C34–C187 and C56–C60. Residue N51 is glycosylated (N-linked (GlcNAc...) asparagine). N-linked (GlcNAc...) asparagine glycans are attached at residues N65 and N110. S152 carries an O-linked (GalNAc...) serine glycan.

It belongs to the EPO/TPO family. In terms of tissue distribution, produced by kidney or liver of adult mammals and by liver of fetal or neonatal mammals.

The protein resides in the secreted. Its function is as follows. Hormone involved in the regulation of erythrocyte proliferation and differentiation and the maintenance of a physiological level of circulating erythrocyte mass. Binds to EPOR leading to EPOR dimerization and JAK2 activation thereby activating specific downstream effectors, including STAT1 and STAT3. The sequence is that of Erythropoietin (EPO) from Macaca mulatta (Rhesus macaque).